The primary structure comprises 97 residues: Large ribosomal subunit protein uL23 (97 aa).

This sequence belongs to the universal ribosomal protein uL23 family. Part of the 50S ribosomal subunit. Contacts protein L29, and trigger factor when it is bound to the ribosome.

Functionally, one of the early assembly proteins it binds 23S rRNA. One of the proteins that surrounds the polypeptide exit tunnel on the outside of the ribosome. Forms the main docking site for trigger factor binding to the ribosome. The sequence is that of Large ribosomal subunit protein uL23 from Bartonella henselae (strain ATCC 49882 / DSM 28221 / CCUG 30454 / Houston 1) (Rochalimaea henselae).